Consider the following 625-residue polypeptide: MQFNYDVIVVGAGHAGCEAAAAAAKLGSQVLLITPDMNKIAQMSCNPAVGGIAKGQIVREIDALGGRMGIVTDATAIQFRMLNRSKGPAMWSPRAQSDRMRFMEAWRDIVEHEPNLYMWQDSVRCLSIRQGAVAGVVTALGVEFQARTVVLTTGTFLGGVMHFGERMIEGGRIAEPAFHGITEQLRDLGFRTDRMKTGTPARIDGRSIDFSLTTEQSGEEDHHRFSYMDTPRRVLRQRSCYALYTNPECHEILSKGLDRSPLYNGQIQSIGPRYCPSIETKIVTFADKEMHQLFLEPEGETSNEFYLNGFSSSLPLEIQLEALKAIPALRHVHIYRPGYAIEYDFFDPTQLRHTLETKPVKGLFFAGQINGTTGYEEAAGQGLIAGINAHLHCHGAGEFTLGRDEAYIGVLIDDLVSKGVDEPYRMFTSRAEYRILLRQDDADMRLTPKAEAIGLADSRRSELLREKQVFRDKLIDFTHKFSLKPDLINPHLESAGHLPLKQGIKLYDLLLRPQIGMNEVCSMVPSLQRIVEEIPASRREEIVEAAEILIKYDGYIKRERALADKINRLESIRLPQHVDYMQMQSLSTEARQKLTSIRPETIAQASRIPGVSPHDVSILLVLCGR.

An FAD-binding site is contributed by G11–G16. G271–F285 provides a ligand contact to NAD(+).

The protein belongs to the MnmG family. In terms of assembly, homodimer. Heterotetramer of two MnmE and two MnmG subunits. It depends on FAD as a cofactor.

The protein resides in the cytoplasm. NAD-binding protein involved in the addition of a carboxymethylaminomethyl (cmnm) group at the wobble position (U34) of certain tRNAs, forming tRNA-cmnm(5)s(2)U34. The polypeptide is tRNA uridine 5-carboxymethylaminomethyl modification enzyme MnmG (Porphyromonas gingivalis (strain ATCC BAA-308 / W83)).